The sequence spans 428 residues: Light-independent protochlorophyllide reductase subunit N (428 aa).

Residues Cys-29, Cys-54, and Cys-115 each coordinate [4Fe-4S] cluster.

This sequence belongs to the BchN/ChlN family. In terms of assembly, protochlorophyllide reductase is composed of three subunits; BchL, BchN and BchB. Forms a heterotetramer of two BchB and two BchN subunits. It depends on [4Fe-4S] cluster as a cofactor.

It catalyses the reaction chlorophyllide a + oxidized 2[4Fe-4S]-[ferredoxin] + 2 ADP + 2 phosphate = protochlorophyllide a + reduced 2[4Fe-4S]-[ferredoxin] + 2 ATP + 2 H2O. It functions in the pathway porphyrin-containing compound metabolism; bacteriochlorophyll biosynthesis (light-independent). In terms of biological role, component of the dark-operative protochlorophyllide reductase (DPOR) that uses Mg-ATP and reduced ferredoxin to reduce ring D of protochlorophyllide (Pchlide) to form chlorophyllide a (Chlide). This reaction is light-independent. The NB-protein (BchN-BchB) is the catalytic component of the complex. The sequence is that of Light-independent protochlorophyllide reductase subunit N from Roseobacter denitrificans (strain ATCC 33942 / OCh 114) (Erythrobacter sp. (strain OCh 114)).